A 400-amino-acid chain; its full sequence is Argininosuccinate synthase (400 aa).

8 to 16 (AYSGGLDTS) is an ATP binding site. L-citrulline-binding residues include Y87 and S92. G117 is a binding site for ATP. L-aspartate-binding residues include T119, N123, and D124. An L-citrulline-binding site is contributed by N123. The L-citrulline site is built by R127, S175, E259, and Y271.

This sequence belongs to the argininosuccinate synthase family. Type 1 subfamily. Homotetramer.

Its subcellular location is the cytoplasm. The catalysed reaction is L-citrulline + L-aspartate + ATP = 2-(N(omega)-L-arginino)succinate + AMP + diphosphate + H(+). It participates in amino-acid biosynthesis; L-arginine biosynthesis; L-arginine from L-ornithine and carbamoyl phosphate: step 2/3. This Parafrankia sp. (strain EAN1pec) protein is Argininosuccinate synthase.